Here is a 661-residue protein sequence, read N- to C-terminus: Acyl-coenzyme A oxidase acox-1.2 (661 aa).

FAD-binding positions include 147–150 (YAQT), 155–156 (GS), and G189. Residues 283 to 286 (KIGY) and R293 each bind substrate. FAD-binding positions include R318 and 338 to 341 (QQHR). Residues H340, S390, H394, and Q402 each coordinate ATP. Residue G409 coordinates FAD. 431–432 (YE) is a binding site for substrate. E432 (proton acceptor) is an active-site residue. E434 serves as a coordination point for FAD. Residues 525 to 528 (RASR) and Y573 each bind ATP. The Microbody targeting signal signature appears at 659–661 (AKL).

The protein belongs to the acyl-CoA oxidase family. Homodimer. Forms a heterodimer with acox-1.1. FAD is required as a cofactor.

It localises to the peroxisome. The catalysed reaction is asc-omegaC5-CoA + O2 = asc-omegaDeltaC5-CoA + H2O2. It functions in the pathway lipid metabolism; peroxisomal fatty acid beta-oxidation. With respect to regulation, activated by ATP. ATP binding leads to a conformational change that promotes FAD cofactor binding and enzyme activity. ATP binding likely occurs during acox-1.2 folding and/or dimer formation. The preference for processing substrates with shorter fatty acid chains is likely due to the closed conformation of the active site. Functionally, involved in the first step of peroxisomal beta-oxidation by catalyzing the desaturation of fatty acid-derived side chains of ascaroside pheromones, which regulates development and behavior. Specifically, shortens ascarosides with 5-carbon omega side chain (asc-omega-C5). Does not shorten indol-3-carbonyl(IC)-ascaroside with 7-carbon or 9-carbon side chains. Does not catalyze the desaturation of fatty acids or hydroxylated fatty acids. The protein is Acyl-coenzyme A oxidase acox-1.2 of Caenorhabditis elegans.